Consider the following 65-residue polypeptide: MNFVKVLFFISACILIMLSAVSGAPEPRWKVFKKIERMGQHIRDGIIKAGPAVAVVGQASTIISG.

The signal sequence occupies residues Met-1–Gly-23.

Belongs to the cecropin family.

The protein resides in the secreted. Has antibacterial activity. In Galleria mellonella (Greater wax moth), this protein is Cecropin (LOC113514368).